Consider the following 976-residue polypeptide: Ubiquitin ligase-binding protein BUL1 (976 aa).

The disordered stretch occupies residues 1-65; sequence MAKDLNDSGF…SPSLHSPKSW (65 aa). The segment covering 23-39 has biased composition (polar residues); the sequence is SDFTANSSTTMNVNANT. The span at 53–64 shows a compositional bias: low complexity; the sequence is SSRSPSLHSPKS. A phosphoserine mark is found at serine 58 and serine 70. Disordered stretches follow at residues 82-124, 145-196, and 857-878; these read LAHS…DGDI, PQGN…SSST, and SEDS…ASLT. The PY-motif signature appears at 156 to 160; that stretch reads FPPSY. A compositionally biased stretch (low complexity) spans 163-176; it reads ANNSTATGAAGSSA. A compositionally biased stretch (polar residues) spans 177 to 196; sequence DLSHQSLSTDALGATRSSST. Positions 862–878 are enriched in low complexity; it reads SHTGNGSSSSPSSASLT.

The protein belongs to the BUL1 family. Component of the RSP5-BUL1/2 ubiquitin ligase complex composed of at least RSP5 and BUL1 or BUL2.

It is found in the cytoplasm. The protein operates within protein modification; protein ubiquitination. In terms of biological role, component of a RSP5 ubiquitin ligase complex which specifies polyubiquitination and intracellular trafficking of the general amino acid permease GAP1 as well as other permeases such as PMA1. The RSP5-BUL1/2 complex is also necessary for the heat-shock element (HSE)-mediated gene expression, nitrogen starvation GLN3-dependent transcription and pressure-induced differential regulation of the 2 tryptophan permeases TAT1 and TAT2. The sequence is that of Ubiquitin ligase-binding protein BUL1 (BUL1) from Saccharomyces cerevisiae (strain ATCC 204508 / S288c) (Baker's yeast).